Here is a 496-residue protein sequence, read N- to C-terminus: Probable cytosol aminopeptidase (496 aa).

Mn(2+) is bound by residues Lys-258 and Asp-263. Residue Lys-270 is part of the active site. The Mn(2+) site is built by Asp-281, Asp-340, and Glu-342. Arg-344 is a catalytic residue.

It belongs to the peptidase M17 family. Requires Mn(2+) as cofactor.

It is found in the cytoplasm. The enzyme catalyses Release of an N-terminal amino acid, Xaa-|-Yaa-, in which Xaa is preferably Leu, but may be other amino acids including Pro although not Arg or Lys, and Yaa may be Pro. Amino acid amides and methyl esters are also readily hydrolyzed, but rates on arylamides are exceedingly low.. It catalyses the reaction Release of an N-terminal amino acid, preferentially leucine, but not glutamic or aspartic acids.. In terms of biological role, presumably involved in the processing and regular turnover of intracellular proteins. Catalyzes the removal of unsubstituted N-terminal amino acids from various peptides. This is Probable cytosol aminopeptidase from Helicobacter pylori (strain P12).